The sequence spans 720 residues: Ornithine decarboxylase (720 aa).

K354 carries the post-translational modification N6-(pyridoxal phosphate)lysine.

Belongs to the Orn/Lys/Arg decarboxylase class-I family. Pyridoxal 5'-phosphate is required as a cofactor.

The catalysed reaction is L-ornithine + H(+) = putrescine + CO2. This is Ornithine decarboxylase (speF) from Haemophilus influenzae (strain ATCC 51907 / DSM 11121 / KW20 / Rd).